Reading from the N-terminus, the 174-residue chain is ATP-dependent protease subunit HslV (174 aa).

Thr2 is a catalytic residue. 3 residues coordinate Na(+): Gly157, Cys160, and Thr163.

This sequence belongs to the peptidase T1B family. HslV subfamily. As to quaternary structure, a double ring-shaped homohexamer of HslV is capped on each side by a ring-shaped HslU homohexamer. The assembly of the HslU/HslV complex is dependent on binding of ATP.

The protein resides in the cytoplasm. The enzyme catalyses ATP-dependent cleavage of peptide bonds with broad specificity.. With respect to regulation, allosterically activated by HslU binding. In terms of biological role, protease subunit of a proteasome-like degradation complex believed to be a general protein degrading machinery. The polypeptide is ATP-dependent protease subunit HslV (Shewanella pealeana (strain ATCC 700345 / ANG-SQ1)).